The chain runs to 380 residues: Cytochrome b (380 aa).

4 helical membrane passes run 34–54, 78–99, 114–134, and 179–199; these read FGSLLGTCLATQIITGLLLAM, WLIRNLHANGASFFFICIYLHI, WNTGVVLLLTLMATAFVGYVL, and FFALHFLLPFLIAGLTLIHLT. Heme b contacts are provided by His84 and His98. Heme b-binding residues include His183 and His197. His202 is an a ubiquinone binding site. Helical transmembrane passes span 227 to 247, 289 to 309, 321 to 341, and 348 to 368; these read TKDLLGFIIMLTPLMTLALFS, LGGVLALTASVLVLFLSPFLH, LSQILFWTLVANLLILTWVGS, and FIIIGQLASLTYFTILLILFP.

Belongs to the cytochrome b family. The cytochrome bc1 complex contains 11 subunits: 3 respiratory subunits (MT-CYB, CYC1 and UQCRFS1), 2 core proteins (UQCRC1 and UQCRC2) and 6 low-molecular weight proteins (UQCRH/QCR6, UQCRB/QCR7, UQCRQ/QCR8, UQCR10/QCR9, UQCR11/QCR10 and a cleavage product of UQCRFS1). This cytochrome bc1 complex then forms a dimer. Heme b is required as a cofactor.

Its subcellular location is the mitochondrion inner membrane. Its function is as follows. Component of the ubiquinol-cytochrome c reductase complex (complex III or cytochrome b-c1 complex) that is part of the mitochondrial respiratory chain. The b-c1 complex mediates electron transfer from ubiquinol to cytochrome c. Contributes to the generation of a proton gradient across the mitochondrial membrane that is then used for ATP synthesis. In Aerodramus vulcanorum (Volcano swiftlet), this protein is Cytochrome b (MT-CYB).